Here is a 1387-residue protein sequence, read N- to C-terminus: Mediator of RNA polymerase II transcription subunit 13 (1387 aa).

Disordered regions lie at residues 81 to 102 (ELNN…PEFS), 354 to 400 (HSAN…ESYS), and 620 to 676 (SVNS…DIPM). 2 stretches are compositionally biased toward polar residues: residues 354 to 367 (HSAN…STGE) and 390 to 400 (SRQNFPTESYS).

This sequence belongs to the Mediator complex subunit 13 family. In terms of assembly, component of the SRB8-11 complex, which itself associates with the Mediator complex.

It is found in the nucleus. Functionally, component of the SRB8-11 complex. The SRB8-11 complex is a regulatory module of the Mediator complex which is itself involved in regulation of basal and activated RNA polymerase II-dependent transcription. The SRB8-11 complex may be involved in the transcriptional repression of a subset of genes regulated by Mediator. It may inhibit the association of the Mediator complex with RNA polymerase II to form the holoenzyme complex. This chain is Mediator of RNA polymerase II transcription subunit 13 (SSN2), found in Kluyveromyces lactis (strain ATCC 8585 / CBS 2359 / DSM 70799 / NBRC 1267 / NRRL Y-1140 / WM37) (Yeast).